Reading from the N-terminus, the 836-residue chain is Protein-glutamine gamma-glutamyltransferase K (836 aa).

The segment covering 1–33 (MDGPRSDMGRSDVSRSDMSRSDMGRSDMGRSDV) has biased composition (basic and acidic residues). 2 disordered regions span residues 1–68 (MDGP…SRGG) and 89–125 (DDWG…DGTI). Threonine 46 carries the post-translational modification Phosphothreonine. A phosphoserine mark is found at serine 48, serine 98, and serine 112. A compositionally biased stretch (basic and acidic residues) spans 89–112 (DDWGREPSDSRDRGSSSRGGRPDS). Active-site residues include cysteine 397, histidine 456, and aspartate 479. Ca(2+) contacts are provided by asparagine 519, aspartate 521, glutamate 568, and glutamate 573. Serine 824 carries the phosphoserine modification.

This sequence belongs to the transglutaminase superfamily. Transglutaminase family. In terms of assembly, interacts with PLAAT4. Requires Ca(2+) as cofactor. In terms of processing, palmitoylated. Post-translationally, the membrane anchorage region possesses a cluster of five cysteines within which fatty acid(s) may become thioester-linked. It is subject to phorbol ester-stimulated phosphorylation and is hypersensitive to proteolysis, which releases the enzyme in a soluble form. Tyrosine-phosphorylated.

Its subcellular location is the membrane. The catalysed reaction is L-glutaminyl-[protein] + L-lysyl-[protein] = [protein]-L-lysyl-N(6)-5-L-glutamyl-[protein] + NH4(+). With respect to regulation, inhibited by retinoic acid, but phorbol ester treatment activates it. Functionally, catalyzes the cross-linking of proteins and the conjugation of polyamines to proteins. Responsible for cross-linking epidermal proteins during formation of the stratum corneum. Involved in cell proliferation. In Oryctolagus cuniculus (Rabbit), this protein is Protein-glutamine gamma-glutamyltransferase K (TGM1).